A 198-amino-acid polypeptide reads, in one-letter code: NAD(P)H dehydrogenase (quinone) (198 aa).

The Flavodoxin-like domain occupies 4-189 (ILVLYYSMYG…SIARYQGEYV (186 aa)). FMN contacts are provided by residues 10 to 15 (SMYGHI) and 78 to 80 (TRF). Y12 contributes to the NAD(+) binding site. Residue W98 coordinates substrate. FMN contacts are provided by residues 113 to 118 (STGTGG) and H133.

The protein belongs to the WrbA family. The cofactor is FMN.

The catalysed reaction is a quinone + NADH + H(+) = a quinol + NAD(+). The enzyme catalyses a quinone + NADPH + H(+) = a quinol + NADP(+). The sequence is that of NAD(P)H dehydrogenase (quinone) from Salmonella typhi.